A 388-amino-acid polypeptide reads, in one-letter code: Probable serine/threonine-protein kinase PBL20 (388 aa).

The S-palmitoyl cysteine moiety is linked to residue Cys-3. In terms of domain architecture, Protein kinase spans 91–372; the sequence is FSRKLKIGEG…FVVESLTNII (282 aa). ATP-binding positions include 97–105 and Lys-128; that span reads IGEGGFGSV. The Proton acceptor role is filled by Asp-221.

This sequence belongs to the protein kinase superfamily. Ser/Thr protein kinase family.

It localises to the cell membrane. It carries out the reaction L-seryl-[protein] + ATP = O-phospho-L-seryl-[protein] + ADP + H(+). It catalyses the reaction L-threonyl-[protein] + ATP = O-phospho-L-threonyl-[protein] + ADP + H(+). Its function is as follows. May be involved in plant defense signaling. The chain is Probable serine/threonine-protein kinase PBL20 from Arabidopsis thaliana (Mouse-ear cress).